Here is a 624-residue protein sequence, read N- to C-terminus: Sulfite reductase [ferredoxin] (624 aa).

The 3'-(S-cysteinyl)-tyrosine (Tyr-Cys) cross-link spans 52–137 (YQQDNRDNRV…ENLGSTISAC (86 aa)). Cys446, Cys452, Cys491, and Cys495 together coordinate [4Fe-4S] cluster. Residue Cys495 participates in siroheme binding.

The protein belongs to the nitrite and sulfite reductase 4Fe-4S domain family. In terms of assembly, monomer. Siroheme serves as cofactor. [4Fe-4S] cluster is required as a cofactor.

It catalyses the reaction hydrogen sulfide + 6 oxidized [2Fe-2S]-[ferredoxin] + 3 H2O = sulfite + 6 reduced [2Fe-2S]-[ferredoxin] + 7 H(+). Functionally, catalyzes the reduction of sulfite to sulfide, a step in the biosynthesis of sulfur-containing amino acids and cofactors. This chain is Sulfite reductase [ferredoxin] (sir), found in Synechococcus elongatus (strain ATCC 33912 / PCC 7942 / FACHB-805) (Anacystis nidulans R2).